A 500-amino-acid polypeptide reads, in one-letter code: Glutelin type-B 4 (500 aa).

An N-terminal signal peptide occupies residues 1 to 24; the sequence is MATIAFSRLSIYFCVLLLCHGSMA. 2 disulfides stabilise this stretch: Cys45/Cys78 and Cys121/Cys310. Cupin type-1 domains follow at residues 50–245 and 316–465; these read LQAF…LVAK and LNIE…EQAR. Residues 481 to 493 are compositionally biased toward polar residues; the sequence is RYQQQTYPGFSNE. The interval 481–500 is disordered; the sequence is RYQQQTYPGFSNESENEALE.

It belongs to the 11S seed storage protein (globulins) family. As to quaternary structure, hexamer; each subunit is composed of an acidic and a basic chain derived from a single precursor and linked by a disulfide bond. Expressed in endosperm (at protein level).

Seed storage protein. The protein is Glutelin type-B 4 (GLUB4) of Oryza sativa subsp. japonica (Rice).